A 356-amino-acid chain; its full sequence is Probable butyrate kinase (356 aa).

It belongs to the acetokinase family.

The protein localises to the cytoplasm. The enzyme catalyses butanoate + ATP = butanoyl phosphate + ADP. This is Probable butyrate kinase from Clostridium perfringens (strain SM101 / Type A).